The chain runs to 602 residues: Elongation factor 4 (602 aa).

The region spanning lysine 8–serine 189 is the tr-type G domain. GTP is bound by residues aspartate 20–threonine 25 and asparagine 136–aspartate 139.

It belongs to the TRAFAC class translation factor GTPase superfamily. Classic translation factor GTPase family. LepA subfamily.

It is found in the cell inner membrane. The enzyme catalyses GTP + H2O = GDP + phosphate + H(+). Functionally, required for accurate and efficient protein synthesis under certain stress conditions. May act as a fidelity factor of the translation reaction, by catalyzing a one-codon backward translocation of tRNAs on improperly translocated ribosomes. Back-translocation proceeds from a post-translocation (POST) complex to a pre-translocation (PRE) complex, thus giving elongation factor G a second chance to translocate the tRNAs correctly. Binds to ribosomes in a GTP-dependent manner. This is Elongation factor 4 from Helicobacter pylori (strain HPAG1).